The primary structure comprises 361 residues: UDP-3-O-acylglucosamine N-acyltransferase (361 aa).

Residue His253 is the Proton acceptor of the active site.

Belongs to the transferase hexapeptide repeat family. LpxD subfamily. As to quaternary structure, homotrimer.

It catalyses the reaction a UDP-3-O-[(3R)-3-hydroxyacyl]-alpha-D-glucosamine + a (3R)-hydroxyacyl-[ACP] = a UDP-2-N,3-O-bis[(3R)-3-hydroxyacyl]-alpha-D-glucosamine + holo-[ACP] + H(+). It participates in bacterial outer membrane biogenesis; LPS lipid A biosynthesis. Its function is as follows. Catalyzes the N-acylation of UDP-3-O-acylglucosamine using 3-hydroxyacyl-ACP as the acyl donor. Is involved in the biosynthesis of lipid A, a phosphorylated glycolipid that anchors the lipopolysaccharide to the outer membrane of the cell. This chain is UDP-3-O-acylglucosamine N-acyltransferase, found in Burkholderia pseudomallei (strain 668).